A 5412-amino-acid chain; its full sequence is MKGARWRRVPWVSLSCLCLCLLPHVVPGTTEDTLITGSKTAAPVTSTGSTTATLEGQSTAASSRTSNQDISASSQNHQTKSTETTSKAQTDTLTQMMTSTLFSSPSVHNVMETAPPDEMTTSFPSSVTNTLMMTSKTITMTTSTDSTLGNTEETSTAGTESSTPVTSAVSITAGQEGQSRTTSWRTSIQDTSASSQNHWTRSTQTTRESQTSTLTHRTTSTPSFSPSVHNVTGTVSQKTSPSGETATSSLCSVTNTSMMTSEKITVTTSTGSTLGNPGETSSVPVTGSLMPVTSAALVTFDPEGQSPATFSRTSTQDTTAFSKNHQTQSVETTRVSQINTLNTLTPVTTSTVLSSPSGFNPSGTVSQETFPSGETTTSSPSSVSNTFLVTSKVFRMPTSRDSTLGNTEETSLSVSGTISAITSKVSTIWWSDTLSTALSPSSLPPKISTAFHTQQSEGAETTGRPHERSSFSPGVSQEIFTLHETTTWPSSFSSKGHTTWSQTELPSTSTGAATRLVTGNPSTGTAGTIPRVPSKVSAIGEPGEPTTYSSHSTTLPKTTGAGAQTQWTQETGTTGEALLSSPSYSVTQMIKTATSPSSSPMLDRHTSQQITTAPSTNHSTIHSTSTSPQESPAVSQRGHTQAPQTTQESQTTRSVSPMTDTKTVTTPGSSFTASGHSPSEIVPQDAPTISAATTFAPAPTGDGHTTQAPTTALQAAPSSHDATLGPSGGTSLSKTGALTLANSVVSTPGGPEGQWTSASASTSPDTAAAMTHTHQAESTEASGQTQTSEPASSGSRTTSAGTATPSSSGASGTTPSGSEGISTSGETTRFSSNPSRDSHTTQSTTELLSASASHGAIPVSTGMASSIVPGTFHPTLSEASTAGRPTGQSSPTSPSASPQETAAISRMAQTQRTRTSRGSDTISLASQATDTFSTVPPTPPSITSTGLTSPQTETHTLSPSGSGKTFTTALISNATPLPVTYASSASTGHTTPLHVTDASSVSTGHATPLPVTSPSSVSTGHTTPLPVTDTSSESTGHVTPLPVTSFSSASTGDSTPLPVTDTSSASTGHVTPLPVTSLSSASTGDTTPLPVTDTSSASTGHATSLPVTDTSSVSTGHTTPLPVTDTSSASTGHATSLPVTDTSSVSTGHTTPLHVTDASSASTGQATPLPVTSLSSVSTGDTTPLPVTSPSSASTGHATPLLVTDTSSASTGHATPLPVTDASSVSTDHATSLPVTIPSAASTGHTTPLPVTDTSSASTGQATSLLVTDTSSVSTGDTTPLPVTSTSSASTGHVTPLHVTSPSSASTGHATPLPVTSLSSASTGDTMPLPVTSPSSASTGDTTPLPVTDASSVSTGHTTPLHVTDASSASTGQATPLPVTSLSSVSTGDTTPLPVTSPSSASTGHATPLLVTDTSSASTGHATPLPVTDASSVSTDHATSLPVTIPSAASTGHTTPLPVTDTSSASTGQATSLLVTDTSSVSTGDTTPLPVTSTSSASTGHVTPLHVTSPSSASTGHATPLPVTSLSSASTGDTMPLPVTSPSSASTGDTTPLPVTDASSVSTGHTTPLPVTSPSSASTGHTTPLPVTDTSSASKGDTTPLPVTSPSSASTGHTTPLPVTDTSSASTGDTTPLPVTNASSLSTGHATPLHVTSPSSASTGHATPLPVTSTSSASTGHATPLPVTGLSSATTDDTTRLPVTDVSSASTGQATPLPVTSLSSVSTGDTTPLPVTSPSSASTGHASPLLVTDASSASTGQATPLPVTDTSSVSTAHATPLPVTGLSSASTDDTTRLPVTDVSSASTGQAIPLPVTSPSSASTGDTTPLPVTDASSASTGDTTSLPVTIPSSASSGHTTSLPVTDASSVSTGHATSLLVTDASSVSTGDTTPLPVTDTNSASTGDTTPLHVTDASSVSTGHATSLPVTSLSSASTGDTTPLPVTSPSSASSGHTTPLPVTDASSVPTGHATSLPVTDASSVSTGHATPLPVTDASSVSTGHATPLPVTDTSSVSTGQATPLPVTSLSSASTGDTTPLPVTDTSSASTGQDTPLPVTSLSSVSTGDTTPLPVTNPSSASTGHATPLLVTDASSISTGHATSLLVTDASSVSTGHATALHDTDASSLSTGDTTPLPVTSPSSTSTGDTTPLPVTETSSVSTGHATSLPVTDTSSASTGHATSLPVTDTSSASTGHATPLPVTDTSSASTGQATPLPVTSPSSASTGHAIPLLVTDTSSASTGQATPLPVTSLSSASTGDTTPLPVTDASSVSTGHATSLPVTSLSSVSTGDTTPLPVTSPSSASTGHATPLHVTDASSASTGHATPLPVTSLSSASTGDTTPLPVTSPSSASTGHATPLHVTDASSVSTGDTTPLPVTSSSSASSGHTTPLPVTDASSASTGDTTPLPVTDTSSASTGHATHLPVTGLSSASTGDTTRLPVTNVSSASTGHATPLPVTSTSSASTGDTTPLPGTDTSSVSTGHTTPLLVTDASSVSTGDTTRLPVTSPSSASTGHTTPLPVTDTPSASTGDTTPLPVTNASSLSTRHATSLHVTSPSSASTGHATSLPVTDTSAASTGHATPLPVTSTSSASTGDTTPLPVTDTYSASTGQATPLPVTSLSSVSTGDTTPLPVTSPSSASTGHATPLLVTDASSASTGQATPLPVTSLSSVSTGDTTPLPVTSPSSASTGHATSLPVTDTSSASTGDTTSLPVTDTSSAYTGDTTSLPVTDTSSSSTGDTTPLLVTETSSVSTGDTTPLPVTDTSSASTGHATPLPVTNTSSVSTGHATPLHVTSPSSASTGHTTPLPVTDASSVSTGHATSLPVTDASSVFTGHATSLPVTIPSSASSGHTTPLPVTDASSVSTGHATSLPVTDASSVSTGHATPLPVTDASSVSTGHATPLPLTSLSSVSTGDTTPLPVTDTSSASTGQATPLPVTSLSSVSTGDTTPLPVTDTSSASTGHATSLPVTDTSSASTGHATPLPDTDTSSASTGHATLLPVTDTSSASIGHATSLPVTDTSSISTGHATPLHVTSPSSASTGHATPLPVTDTSSASTGHANPLHVTSPSSASTGHATPLPVTDTSSASTGHATPLPVTSLSSVSTGDTTPLPVTSPSSASTGHTTPLPVTDTSSASTGQATALPVTSTSSASTGDTTPLPVTDTSSASTGQATPLPVTSLSSVSTGDTTPLPVTSPSSASTGHATPLLVTDASSASTGQATPLPVTSLSSVSTGDTTPLPVTSPSSASTGHATSLPVTDTSSASTGDTTSLPVTDTSSAYTGDTTSLPVTDTSSSSTGDTTPLLVTETSSVSTGHATPLLVTDASSASTGHATPLHVTSPSSASTGDTTPVPVTDTSSVSTGHATPLPVTGLSSASTGDTTRLPVTDISSASTGQATPLPVTNTSSVSTGDTMPLPVTSPSSASTGHATPLPVTSTSSASTGHATPVPVTSTSSASTGHTTPLPVTDTSSASTGDTTPLPVTSPSSASTGHTTPLHVTIPSSASTGDTSTLPVTGASSASTGHATPLPVTDTSSVSTGHATPLPVTSLSSVSTGDTTPLPVTDASSASTGQATPLPVTSLSSVSTGDTTPLLVTDASSVSTGHATPLPVTDTSSASTGDTTRLPVTDTSSASTGQATPLPVTSLSSVSTGDTTPLLVTDASSVSTGHATPLPVTDTSSASTGDTTRLPVTDTSSASTGQATPLPVTIPSSSSSGHTTPLPVTSTSSVSTGHVTPLHVTSPSSASTGHVTPLPVTSTSSASTGHATPLLVTDASSVSTGHATPLPVTDASSASTGDTTPLPVTDTSSASTGQATPLPVTSLSSVSTGDTTPLPVTDASSASTGHATPLPVTIPSSVSTGDTMPLPVTSPSSASTGHATPLPVTGLSSASTGDTTPLPVTDTSSASTRHATPLPVTDTSSASTDDTTRLPVTDVSSASTGHATPLPVTSTSSASTGDTTPLPVTDTSSVSTGHATSLPVTSRSSASTGHATPLPVTDTSSVSTGHATPLPVTSTSSVSTGHATPLPVTSPSSASTGHATPVPVTSTSSASTGDTTPLPVTNASSLSTGHATPLHVTSPSSASRGDTSTLPVTDASSASTGHATPLPLTSLSSVSTGDTTPLPVTDTSSASTGQATPLPVTSLSSVSTGDTTPLPVTIPSSASSGHTTSLPVTDASSVSTGHGTPLPVTSTSSASTGDTTPLPVTDTSSASTGHATPLPVTDTSSASTGHATPLPVTSLSSVSTGHATPLAVSSATSASTVSSDSPLKMETPGMTTPSLKTDGGRRTATSPPPTTSQTIISTIPSTAMHTRSTAAPIPILPERGVSLFPYGAGAGDLEFVRRTVDFTSPLFKPATGFPLGSSLRDSLYFTDNGQIIFPESDYQIFSYPNPLPTGFTGRDPVALVAPFWDDADFSTGRGTTFYQEYETFYGEHSLLVQQAESWIRKMTNNGGYKARWALKVTWVNAHAYPAQWTLGSNTYQAILSTDGSRSYALFLYQSGGMQWDVAQRSGNPVLMGFSSGDGYFENSPLMSQPVWERYRPDRFLNSNSGLQGLQFYRLHREERPNYRLECLQWLKSQPRWPSWGWNQVSCPCSWQQGRRDLRFQPVSIGRWGLGSRQLCSFTSWRGGVCCSYGPWGEFREGWHVQRPWQLAQELEPQSWCCRWNDKPYLCALYQQRRPHVGCATYRPPQPAWMFGDPHITTLDGVSYTFNGLGDFLLVGAQDGNSSFLLQGRTAQTGSAQATNFIAFAAQYRSSSLGPVTVQWLLEPHDAIRVLLDNQTVTFQPDHEDGGGQETFNATGVLLSRNGSEVSASFDGWATVSVIALSNILHASASLPPEYQNRTEGLLGVWNNNPEDDFRMPNGSTIPPGSPEEMLFHFGMTWQINGTGLLGKRNDQLPSNFTPVFYSQLQKNSSWAEHLISNCDGDSSCIYDTLALRNASIGLHTREVSKNYEQANATLNQYPPSINGGRVIEAYKGQTTLIQYTSNAEDANFTLRDSCTDLELFENGTLLWTPKSLEPFTLEILARSAKIGLASALQPRTVVCHCNAESQCLYNQTSRVGNSSLEVAGCKCDGGTFGRYCEGSEDACEEPCFPSVHCVPGKGCEACPPNLTGDGRHCAALGSSFLCQNQSCPVNYCYNQGHCYISQTLGCQPMCTCPPAFTDSRCFLAGNNFSPTVNLELPLRVIQLLLSEEENASMAEVNASVAYRLGTLDMRAFLRNSQVERIDSAAPASGSPIQHWMVISEFQYRPRGPVIDFLNNQLLAAVVEAFLYHVPRRSEEPRNDVVFQPISGEDVRDVTALNVSTLKAYFRCDGYKGYDLVYSPQSGFTCVSPCSRGYCDHGGQCQHLPSGPRCSCVSFSIYTAWGEHCEHLSMKLDAFFGIFFGALGGLLLLGVGTFVVLRFWGCSGARFSYFLNSAEALP.

The signal sequence occupies residues 1–28 (MKGARWRRVPWVSLSCLCLCLLPHVVPG). 2 disordered regions span residues 40-87 (TAAP…TTSK) and 142-249 (TSTD…ATSS). Residues 43–4241 (PVTSTGSTTA…SVSTGHATPL (4199 aa)) are variable number of tandem repeats (VNTR). The segment covering 142–163 (TSTDSTLGNTEETSTAGTESST) has biased composition (low complexity). Thr154 and Thr156 each carry an O-linked (GalNAc...) threonine glycan. Residues 164–199 (PVTSAVSITAGQEGQSRTTSWRTSIQDTSASSQNHW) show a composition bias toward polar residues. Positions 200–223 (TRSTQTTRESQTSTLTHRTTSTPS) are enriched in low complexity. The span at 224–249 (FSPSVHNVTGTVSQKTSPSGETATSS) shows a compositional bias: polar residues. Asn230 is a glycosylation site (N-linked (GlcNAc...) asparagine). The O-linked (GalNAc...) threonine glycan is linked to Thr234. An N-linked (GlcNAc...) asparagine glycan is attached at Asn255. Polar residues-rich tracts occupy residues 267–285 (TTST…SVPV), 306–328 (SPAT…HQTQ), and 358–367 (GFNPSGTVSQ). Disordered stretches follow at residues 267–286 (TTST…VPVT), 303–328 (EGQS…HQTQ), 353–383 (LSSP…PSSV), 438–473 (LSPS…SFSP), 488–580 (WPSS…ALLS), 592–853 (TATS…ASAS), 868–963 (VPGT…SGSG), 983–1864 (SSAS…DASS), 1878–2078 (ASSV…TGHA), 2111–2220 (TALH…ASTG), 2232–2814 (SAST…TGHA), 2837–3306 (IPSS…SSVS), 3320–3580 (SAST…VSTG), 3592–3644 (SVST…VSTG), 3656–3756 (SVST…ASTG), and 3769–4223 (VSTG…GHAT). Residues Thr364, Thr369, and Thr376 are each glycosylated (O-linked (GalNAc...) threonine). Low complexity predominate over residues 368 to 383 (ETFPSGETTTSSPSSV). Composition is skewed to polar residues over residues 450–459 (AFHTQQSEGA), 488–526 (WPSS…TGTA), and 546–557 (TTYSSHSTTLPK). Composition is skewed to low complexity over residues 558–577 (TTGA…TGEA) and 615–627 (STNH…TSTS). The N-linked (GlcNAc...) asparagine glycan is linked to Asn617. 3 O-linked (GalNAc...) threonine glycosylation sites follow: Thr620, Thr666, and Thr688. A compositionally biased stretch (polar residues) spans 628-677 (PQESPAVSQRGHTQAPQTTQESQTTRSVSPMTDTKTVTTPGSSFTASGHS). The segment covering 705-717 (TTQAPTTALQAAP) has biased composition (low complexity). Polar residues predominate over residues 729–746 (GTSLSKTGALTLANSVVS). Thr747 carries an O-linked (GalNAc...) threonine glycan. The segment covering 756–771 (TSASASTSPDTAAAMT) has biased composition (low complexity). Residues 772–789 (HTHQAESTEASGQTQTSE) are compositionally biased toward polar residues. The span at 790–828 (PASSGSRTTSAGTATPSSSGASGTTPSGSEGISTSGETT) shows a compositional bias: low complexity. O-linked (GalNAc...) threonine glycosylation is found at Thr797, Thr798, Thr802, Thr804, Thr813, and Thr814. Residues 829–852 (RFSSNPSRDSHTTQSTTELLSASA) are compositionally biased toward polar residues. 3 O-linked (GalNAc...) threonine glycosylation sites follow: Thr881, Thr886, and Thr892. Low complexity predominate over residues 885-903 (PTGQSSPTSPSASPQETAA). Residues 907–928 (MAQTQRTRTSRGSDTISLASQA) show a composition bias toward polar residues. A compositionally biased stretch (low complexity) spans 929–950 (TDTFSTVPPTPPSITSTGLTSP). O-linked (GalNAc...) threonine glycans are attached at residues Thr931, Thr934, Thr938, Thr943, Thr945, Thr948, Thr952, Thr954, Thr1003, Thr1007, Thr1012, Thr1019, Thr1022, Thr1023, Thr1028, Thr1030, Thr1035, Thr1039, Thr1044, Thr1051, Thr1055, Thr1060, Thr1062, Thr1067, Thr1071, Thr1076, Thr1083, Thr1086, Thr1087, Thr1092, Thr1094, Thr1099, Thr1103, Thr1108, Thr1110, Thr1115, Thr1118, Thr1119, Thr1124, Thr1126, Thr1131, Thr1135, Thr1172, Thr1179, Thr1182, Thr1183, Thr1188, Thr1195, Thr1199, Thr1204, Thr1236, Thr1243, Thr1246, and Thr1247. Residues 951-963 (QTETHTLSPSGSG) are compositionally biased toward polar residues. Residues 1007 to 1024 (TPLPVTSPSSVSTGHTTP) show a composition bias toward low complexity. Residues 1028-1054 (TDTSSESTGHVTPLPVTSFSSASTGDS) are compositionally biased toward polar residues. A compositionally biased stretch (polar residues) spans 1060 to 1086 (TDTSSASTGHVTPLPVTSLSSASTGDT). Over residues 1092–1118 (TDTSSASTGHATSLPVTDTSSVSTGHT) the composition is skewed to polar residues. 2 stretches are compositionally biased toward polar residues: residues 1124-1150 (TDTS…TGHT) and 1157-1197 (DASS…STGH). Composition is skewed to polar residues over residues 1204 to 1213 (TDTSSASTGH) and 1221 to 1246 (DASS…TGHT). The segment covering 1252 to 1262 (TDTSSASTGQA) has biased composition (polar residues). Positions 1263–1279 (TSLLVTDTSSVSTGDTT) are enriched in low complexity. 17 O-linked (GalNAc...) threonine glycosylation sites follow: Thr1278, Thr1279, Thr1284, Thr1286, Thr1291, Thr1295, Thr1300, Thr1307, Thr1311, Thr1316, Thr1323, Thr1326, Thr1332, Thr1339, Thr1342, Thr1343, and Thr1348. The segment covering 1281–1325 (LPVTSTSSASTGHVTPLHVTSPSSASTGHATPLPVTSLSSASTGD) has biased composition (polar residues). Residues 1332–1342 (TSPSSASTGDT) show a composition bias toward polar residues. 2 stretches are compositionally biased toward polar residues: residues 1349–1358 (DASSVSTGHT) and 1365–1405 (DASS…STGH). O-linked (GalNAc...) threonine glycosylation is found at Thr1380, Thr1387, Thr1390, Thr1391, Thr1396, Thr1403, Thr1407, Thr1412, Thr1444, Thr1451, Thr1454, and Thr1455. Polar residues-rich tracts occupy residues 1412 to 1421 (TDTSSASTGH) and 1429 to 1454 (DASS…TGHT). Residues 1460 to 1470 (TDTSSASTGQA) are compositionally biased toward polar residues. Low complexity predominate over residues 1471–1487 (TSLLVTDTSSVSTGDTT). Thr1486, Thr1487, Thr1492, Thr1494, Thr1499, Thr1503, Thr1508, Thr1515, Thr1519, Thr1524, Thr1531, Thr1534, Thr1540, Thr1547, Thr1550, Thr1551, Thr1556, Thr1563, Thr1566, Thr1567, Thr1572, Thr1579, Thr1582, Thr1583, Thr1588, Thr1590, Thr1598, Thr1599, Thr1604, Thr1611, Thr1614, Thr1615, Thr1620, Thr1622, Thr1627, and Thr1630 each carry an O-linked (GalNAc...) threonine glycan. The span at 1489 to 1533 (LPVTSTSSASTGHVTPLHVTSPSSASTGHATPLPVTSLSSASTGD) shows a compositional bias: polar residues. The segment covering 1540–1550 (TSPSSASTGDT) has biased composition (polar residues). Polar residues predominate over residues 1557-1582 (DASSVSTGHTTPLPVTSPSSASTGHT). Over residues 1588–1614 (TDTSSASKGDTTPLPVTSPSSASTGHT) the composition is skewed to polar residues. Positions 1620-1631 (TDTSSASTGDTT) are enriched in low complexity. Positions 1633-1661 (LPVTNASSLSTGHATPLHVTSPSSASTGH) are enriched in polar residues. N-linked (GlcNAc...) asparagine glycosylation is present at Asn1637. Thr1659, Thr1663, Thr1668, Thr1670, Thr1675, Thr1679, Thr1716, Thr1723, Thr1726, Thr1727, Thr1732, Thr1764, Thr1766, Thr1812, Thr1819, Thr1822, Thr1823, Thr1828, Thr1835, Thr1838, Thr1839, Thr1844, Thr1854, and Thr1855 each carry an O-linked (GalNAc...) threonine glycan. A compositionally biased stretch (low complexity) spans 1668 to 1679 (TSTSSASTGHAT). Composition is skewed to polar residues over residues 1701 to 1741 (DVSS…STGH), 1749 to 1773 (DASS…STAH), and 1812 to 1822 (TSPSSASTGDT). Low complexity predominate over residues 1828 to 1840 (TDASSASTGDTTS). Polar residues-rich tracts occupy residues 1841–1864 (LPVT…DASS), 1892–1902 (TDTNSASTGDT), and 1909–1950 (DASS…SGHT). Residues Thr1931, Thr1934, Thr1935, Thr1940, Thr1950, Thr1951, Thr1956, Thr1963, Thr1995, Thr1999, Thr2004, Thr2006, Thr2015, Thr2020, Thr2027, Thr2030, Thr2031, Thr2036, Thr2038, Thr2047, Thr2052, Thr2062, Thr2063, Thr2132, Thr2137, Thr2139, Thr2142, Thr2143, Thr2148, Thr2150, Thr2155, Thr2159, Thr2164, Thr2180, Thr2182, Thr2187, Thr2191, Thr2196, Thr2198, Thr2203, Thr2207, Thr2244, Thr2254, and Thr2255 are each glycosylated (O-linked (GalNAc...) threonine). Residues 1957-1981 (DASSVPTGHATSLPVTDASSVSTGH) show a composition bias toward polar residues. Positions 2004–2030 (TDTSSVSTGQATPLPVTSLSSASTGDT) are enriched in polar residues. Residues 2036-2077 (TDTSSASTGQDTPLPVTSLSSVSTGDTTPLPVTNPSSASTGH) are compositionally biased toward polar residues. Over residues 2125-2146 (DTTPLPVTSPSSTSTGDTTPLP) the composition is skewed to low complexity. The segment covering 2148–2189 (TETSSVSTGHATSLPVTDTSSASTGHATSLPVTDTSSASTGH) has biased composition (polar residues). 2 stretches are compositionally biased toward polar residues: residues 2196–2219 (TDTS…SAST) and 2232–2254 (SAST…TGDT). Residues 2261–2270 (DASSVSTGHA) show a composition bias toward polar residues. The segment covering 2271–2283 (TSLPVTSLSSVST) has biased composition (low complexity). O-linked (GalNAc...) threonine glycosylation is found at Thr2283, Thr2286, Thr2287, Thr2292, Thr2299, Thr2303, Thr2308, Thr2324, Thr2331, Thr2334, Thr2335, Thr2340, Thr2347, Thr2351, Thr2356, Thr2363, Thr2366, Thr2367, Thr2372, Thr2382, Thr2383, Thr2388, Thr2395, Thr2398, Thr2399, and Thr2406. Residues 2284–2301 (GDTTPLPVTSPSSASTGH) are compositionally biased toward polar residues. Polar residues predominate over residues 2309-2349 (DASSASTGHATPLPVTSLSSASTGDTTPLPVTSPSSASTGH). Positions 2366-2399 (TTPLPVTSSSSASSGHTTPLPVTDASSASTGDTT) are enriched in low complexity. 2 stretches are compositionally biased toward polar residues: residues 2404-2413 (TDTSSASTGH) and 2421-2445 (GLSS…STGH). Asn2437 carries an N-linked (GlcNAc...) asparagine glycan. Residues Thr2452, Thr2454, Thr2459, Thr2462, Thr2463, Thr2468, Thr2500, Thr2507, Thr2510, Thr2511, Thr2516, Thr2518, Thr2523, and Thr2526 are each glycosylated (O-linked (GalNAc...) threonine). A compositionally biased stretch (low complexity) spans 2452–2471 (TSTSSASTGDTTPLPGTDTS). The span at 2485 to 2510 (DASSVSTGDTTRLPVTSPSSASTGHT) shows a compositional bias: polar residues. The span at 2517 to 2573 (DTPSASTGDTTPLPVTNASSLSTRHATSLHVTSPSSASTGHATSLPVTDTSAASTGH) shows a compositional bias: polar residues. The N-linked (GlcNAc...) asparagine glycan is linked to Asn2533. Thr2564, Thr2566, Thr2571, Thr2575, Thr2580, Thr2582, Thr2587, Thr2590, Thr2591, Thr2596, Thr2598, Thr2619, Thr2622, Thr2623, Thr2628, Thr2660, Thr2667, Thr2670, Thr2671, Thr2676, Thr2683, Thr2687, Thr2692, and Thr2694 each carry an O-linked (GalNAc...) threonine glycan. Over residues 2580-2591 (TSTSSASTGDTT) the composition is skewed to low complexity. Polar residues-rich tracts occupy residues 2597 to 2637 (DTYS…STGH) and 2645 to 2691 (DASS…SLPV). Over residues 2692–2704 (TDTSSASTGDTTS) the composition is skewed to low complexity. Residues 2705-2723 (LPVTDTSSAYTGDTTSLPV) show a composition bias toward polar residues. Residues 2724 to 2735 (TDTSSSSTGDTT) are compositionally biased toward low complexity. O-linked (GalNAc...) threonine glycosylation is found at Thr2740, Thr2742, Thr2750, Thr2751, Thr2756, Thr2758, Thr2763, and Thr2767. Over residues 2740 to 2750 (TETSSVSTGDT) the composition is skewed to polar residues. Over residues 2756 to 2798 (TDTSSASTGHATPLPVTNTSSVSTGHATPLHVTSPSSASTGHT) the composition is skewed to polar residues. N-linked (GlcNAc...) asparagine glycosylation is present at Asn2773. Residues Thr2779, Thr2783, Thr2788, Thr2795, Thr2798, Thr2799, and Thr2804 are each glycosylated (O-linked (GalNAc...) threonine). 2 stretches are compositionally biased toward polar residues: residues 2805–2814 (DASSVSTGHA) and 2837–2846 (IPSSASSGHT). Thr2846, Thr2847, and Thr2852 each carry an O-linked (GalNAc...) threonine glycan. Over residues 2853 to 2877 (DASSVSTGHATSLPVTDASSVSTGH) the composition is skewed to polar residues. Residues 2895–2907 (TPLPLTSLSSVST) show a composition bias toward low complexity. Residues Thr2910, Thr2911, Thr2916, Thr2918, Thr2923, Thr2927, Thr2932, Thr2939, Thr2942, Thr2943, Thr2948, Thr2950, Thr2955, Thr2959, Thr2966, Thr2971, and Thr2975 are each glycosylated (O-linked (GalNAc...) threonine). The span at 2916-2942 (TDTSSASTGQATPLPVTSLSSVSTGDT) shows a compositional bias: polar residues. A compositionally biased stretch (polar residues) spans 2948 to 2973 (TDTSSASTGHATSLPVTDTSSASTGH). Composition is skewed to polar residues over residues 2980-2989 (TDTSSASTGH) and 3009-3037 (LPVT…STGH). Residues Thr3023, Thr3028, Thr3035, and Thr3039 are each glycosylated (O-linked (GalNAc...) threonine). Polar residues predominate over residues 3044-3069 (TDTSSASTGHANPLHVTSPSSASTGH). Thr3071, Thr3076, Thr3078, Thr3083, Thr3087, Thr3092, Thr3099, Thr3102, Thr3103, Thr3108, Thr3115, Thr3118, Thr3119, Thr3124, Thr3126, Thr3131, Thr3135, Thr3140, Thr3142, Thr3147, Thr3150, Thr3151, Thr3156, Thr3158, Thr3163, Thr3167, Thr3172, Thr3179, Thr3182, Thr3183, Thr3188, Thr3220, Thr3227, Thr3230, Thr3231, Thr3236, Thr3243, Thr3247, Thr3252, and Thr3254 each carry an O-linked (GalNAc...) threonine glycan. Residues 3076–3118 (TDTSSASTGHATPLPVTSLSSVSTGDTTPLPVTSPSSASTGHT) are compositionally biased toward polar residues. Residues 3124-3134 (TDTSSASTGQA) are compositionally biased toward polar residues. The segment covering 3140–3151 (TSTSSASTGDTT) has biased composition (low complexity). Polar residues-rich tracts occupy residues 3156–3197 (TDTS…STGH) and 3205–3251 (DASS…SLPV). The segment covering 3252–3264 (TDTSSASTGDTTS) has biased composition (low complexity). Over residues 3265–3283 (LPVTDTSSAYTGDTTSLPV) the composition is skewed to polar residues. A compositionally biased stretch (low complexity) spans 3284–3295 (TDTSSSSTGDTT). O-linked (GalNAc...) threonine glycans are attached at residues Thr3294, Thr3332, Thr3339, Thr3342, Thr3343, Thr3348, Thr3350, Thr3355, and Thr3359. Residues 3320–3337 (SASTGHATPLHVTSPSSA) show a composition bias toward polar residues. Positions 3338 to 3356 (STGDTTPVPVTDTSSVSTG) are enriched in low complexity. Composition is skewed to polar residues over residues 3365–3374 (GLSSASTGDT) and 3381–3405 (DISS…STGD). A glycan (N-linked (GlcNAc...) asparagine) is linked at Asn3397. 11 O-linked (GalNAc...) threonine glycosylation sites follow: Thr3398, Thr3403, Thr3406, Thr3412, Thr3419, Thr3423, Thr3428, Thr3430, Thr3435, Thr3439, and Thr3444. The segment covering 3412–3421 (TSPSSASTGH) has biased composition (polar residues). Positions 3428–3471 (TSTSSASTGHATPVPVTSTSSASTGHTTPLPVTDTSSASTGDTT) are enriched in low complexity. Ser3445 is a glycosylation site (O-linked (GalNAc...) serine). Thr3446, Thr3451, Thr3454, Thr3455, Thr3460, Thr3462, Thr3467, Thr3470, Thr3471, Thr3476, Thr3483, Thr3486, Thr3487, Thr3492, Thr3499, Thr3502, Thr3504, Thr3508, Thr3515, Thr3519, Thr3524, Thr3526, Thr3531, Thr3535, Thr3540, Thr3547, Thr3550, Thr3551, Thr3556, Thr3567, Thr3614, Thr3615, Thr3622, Thr3678, Thr3679, Thr3686, Thr3691, Thr3695, Thr3700, Thr3710, Thr3711, Thr3716, Thr3718, Thr3723, Thr3727, Thr3732, Thr3739, Thr3743, Thr3748, Thr3780, Thr3787, Thr3790, Thr3791, Thr3796, Thr3798, Thr3803, Thr3807, Thr3812, Thr3822, Thr3823, Thr3828, Thr3835, Thr3839, Thr3844, Thr3851, Thr3854, Thr3860, Thr3867, Thr3871, Thr3876, Thr3883, Thr3886, Thr3887, Thr3892, Thr3894, Thr3899, Thr3903, Thr3935, Thr3940, Thr3942, Thr3947, Thr3950, Thr3951, Thr3956, Thr3958, Thr3963, Thr3967, Thr3972, Thr3979, Thr3983, Thr3988, Thr3990, Thr3995, Thr3999, Thr4004, Thr4006, Thr4011, Thr4015, and Thr4020 each carry an O-linked (GalNAc...) threonine glycan. The span at 3473–3486 (LPVTSPSSASTGHT) shows a compositional bias: polar residues. A compositionally biased stretch (polar residues) spans 3493–3517 (IPSSASTGDTSTLPVTGASSASTGH). Polar residues predominate over residues 3524–3550 (TDTSSVSTGHATPLPVTSLSSVSTGDT). Residues 3557-3580 (DASSASTGQATPLPVTSLSSVSTG) show a composition bias toward polar residues. Residues 3604-3615 (TDTSSASTGDTT) are compositionally biased toward low complexity. A compositionally biased stretch (polar residues) spans 3620–3644 (TDTSSASTGQATPLPVTSLSSVSTG). Positions 3668–3679 (TDTSSASTGDTT) are enriched in low complexity. Positions 3684–3694 (TDTSSASTGQA) are enriched in polar residues. Positions 3710 to 3728 (TTPLPVTSTSSVSTGHVTP) are enriched in low complexity. Polar residues predominate over residues 3730 to 3741 (HVTSPSSASTGH). Over residues 3780–3791 (TDASSASTGDTT) the composition is skewed to low complexity. A compositionally biased stretch (polar residues) spans 3796 to 3822 (TDTSSASTGQATPLPVTSLSSVSTGDT). Residues 3860-3869 (TSPSSASTGH) are compositionally biased toward polar residues. Residues 3877 to 3886 (GLSSASTGDT) are compositionally biased toward polar residues. A compositionally biased stretch (polar residues) spans 3892 to 3901 (TDTSSASTRH). Positions 3940–3951 (TSTSSASTGDTT) are enriched in low complexity. The segment covering 3956–3981 (TDTSSVSTGHATSLPVTSRSSASTGH) has biased composition (polar residues). The span at 3988 to 3997 (TDTSSVSTGH) shows a compositional bias: polar residues. The segment covering 3999 to 4011 (TPLPVTSTSSVST) has biased composition (low complexity). A compositionally biased stretch (polar residues) spans 4018–4029 (PVTSPSSASTGH). 4 O-linked (GalNAc...) serine glycosylation sites follow: Ser4021, Ser4023, Ser4024, and Ser4026. Thr4027, Thr4031, and Thr4036 each carry an O-linked (GalNAc...) threonine glycan. Over residues 4030–4047 (ATPVPVTSTSSASTGDTT) the composition is skewed to low complexity. A glycan (O-linked (GalNAc...) serine) is linked at Ser4037. Thr4038, Thr4043, Thr4046, and Thr4047 each carry an O-linked (GalNAc...) threonine glycan. Residues 4049–4093 (LPVTNASSLSTGHATPLHVTSPSSASRGDTSTLPVTDASSASTGH) show a composition bias toward polar residues. N-linked (GlcNAc...) asparagine glycosylation occurs at Asn4053. Residues Thr4078 and Thr4084 are each glycosylated (O-linked (GalNAc...) threonine). The segment covering 4095–4107 (TPLPLTSLSSVST) has biased composition (low complexity). 30 O-linked (GalNAc...) threonine glycosylation sites follow: Thr4110, Thr4111, Thr4116, Thr4118, Thr4123, Thr4127, Thr4132, Thr4139, Thr4142, Thr4143, Thr4148, Thr4158, Thr4159, Thr4164, Thr4171, Thr4175, Thr4180, Thr4182, Thr4187, Thr4190, Thr4191, Thr4196, Thr4198, Thr4203, Thr4207, Thr4212, Thr4214, Thr4219, Thr4223, and Thr4239. Residues 4116–4142 (TDTSSASTGQATPLPVTSLSSVSTGDT) show a composition bias toward polar residues. A compositionally biased stretch (polar residues) spans 4149-4173 (IPSSASSGHTTSLPVTDASSVSTGH). Residues 4180 to 4191 (TSTSSASTGDTT) are compositionally biased toward low complexity. A compositionally biased stretch (polar residues) spans 4196–4205 (TDTSSASTGH). Polar residues predominate over residues 4212–4223 (TDTSSASTGHAT). Low complexity predominate over residues 4242–4254 (AVSSATSASTVSS). The interval 4242–4288 (AVSSATSASTVSSDSPLKMETPGMTTPSLKTDGGRRTATSPPPTTSQ) is disordered. 6 O-linked (GalNAc...) threonine glycosylation sites follow: Thr4272, Thr4278, Thr4280, Thr4289, Thr4293, and Thr4297. In terms of domain architecture, NIDO spans 4397 to 4552 (PFWDDADFST…GLQFYRLHRE (156 aa)). In terms of domain architecture, AMOP spans 4553–4668 (ERPNYRLECL…YLCALYQQRR (116 aa)). One can recognise a VWFD domain in the interval 4680–4880 (QPAWMFGDPH…TWQINGTGLL (201 aa)). N-linked (GlcNAc...) asparagine glycosylation is found at Asn4715, Asn4768, Asn4787, Asn4796, Asn4831, Asn4852, Asn4875, Asn4902, Asn4928, Asn4946, Asn4982, Asn4997, Asn5045, Asn5052, Asn5100, and Asn5119. The EGF-like 1 domain occupies 5118 to 5157 (QNQSCPVNYCYNQGHCYISQTLGCQPMCTCPPAFTDSRCF). Disulfide bonds link Cys5122-Cys5133, Cys5127-Cys5145, and Cys5147-Cys5156. N-linked (GlcNAc...) asparagine glycosylation is found at Asn5185, Asn5192, and Asn5292. Residues 5321–5360 (VSPCSRGYCDHGGQCQHLPSGPRCSCVSFSIYTAWGEHCE) enclose the EGF-like 2 domain. 3 disulfide bridges follow: Cys5324/Cys5335, Cys5329/Cys5344, and Cys5346/Cys5359. The helical transmembrane segment at 5369-5389 (FFGIFFGALGGLLLLGVGTFV) threads the bilayer.

A heterodimeric complex, composed of a mucin-4 alpha chain and a cysteine-rich transmembrane mucin-4 beta chain. Mucin-4 beta chain interacts with ERBB2 via the EGF-like domain 1. In nonpolarized cells, associates with ERBB2 and ERBB3. Post-translationally, proteolytically cleaved into 2 chains, mucin-4 alpha chain and mucin-4 beta chain. Highly O-glycosylated. In terms of processing, is predominantly N-glycosylated. Expressed in the thymus, thyroid, lung, trachea, esophagus, stomach, small intestine, colon, testis, prostate, ovary, uterus, placenta, and mammary and salivary glands. Expressed in carcinomas arising from some of these epithelia, such as lung cancers, squamous cell carcinomas of the upper aerodigestive tract, mammary carcinomas, biliary tract, colon, and cervix cancers. Minimally or not expressed in the normal pancreas or chronic pancreatitis, but is highly expressed in pancreatic tumors and pancreatic tumor cell lines.

Its subcellular location is the cell membrane. It is found in the secreted. Functionally, membrane-bound mucin, a family of highly glycosylated proteins that constitute the major component of the mucus, the slimy and viscous secretion covering epithelial surfaces. These glycoproteins play important roles in the protection of the epithelium and are implicated in epithelial renewal and differentiation. Regulates cellular behavior through both anti-adhesive effects on cell-cell and cell-extracellular matrix interactions and its ability to act as an intramembrane ligand for ERBB2. Plays an important role in proliferation and differentiation of epithelial cells by inducing specific phosphorylation of ERBB2. In polarized epithelial cells, segregates ERBB2 and other ERBB receptors and prevents ERBB2 from acting as a coreceptor. The interaction with ERBB2 leads to enhanced expression of CDKN1B. The formation of a MUC4-ERBB2-ERBB3-NRG1 complex leads to down-regulation of CDKN1B, resulting in repression of apoptosis and stimulation of proliferation. Its ability to promote tumor growth may be mainly due to repression of apoptosis as opposed to proliferation. The polypeptide is Mucin-4 (MUC4) (Homo sapiens (Human)).